The following is a 547-amino-acid chain: Mucin-13 (547 aa).

A compositionally biased stretch (low complexity) spans 1 to 210 (MSQSSGGTST…TVTSSSSTGS (210 aa)). Residues 1–218 (MSQSSGGTST…GSNDPCNSNP (218 aa)) are disordered. In terms of domain architecture, EGF-like 1 spans 210–249 (SNDPCNSNPCKSPASCVKLYDSYFCLCLEGYYYNNSSSCV). 3 cysteine pairs are disulfide-bonded: C214/C225, C219/C234, and C236/C248. Residues N243, N244, and N263 are each glycosylated (N-linked (GlcNAc...) asparagine). The region spanning 250–366 (KGTTFPGEIG…ERYFQQDRCD (117 aa)) is the SEA domain. EGF-like domains are found at residues 361 to 401 (QQDR…PFCV) and 401 to 441 (VAPT…GKCE). Disulfide bonds link C365–C378, C370–C384, C386–C400, C409–C427, and C429–C440. The helical transmembrane segment at 459–479 (ILTIVGTIAGAFILILLIVFI) threads the bilayer. The Cytoplasmic segment spans residues 480 to 547 (VSMRSKNKKK…NHRSMPRPDY (68 aa)). The segment at 525-547 (KTGVPSQTSNPYANHRSMPRPDY) is disordered.

In terms of assembly, homodimer of beta subunits. Post-translationally, cleaved into two subunits, alpha and beta, probably between the first EGF domain and the SEA domain. Beta subunit contains the cytoplasmic tail and alpha subunit the extracellular tail. The homooligomerization into dimers is dependent on intrachain disulfide bonds. Highly glycosylated.

It localises to the cell membrane. The protein resides in the secreted. In terms of biological role, epithelial and hemopoietic transmembrane mucin that may play a role in cell signaling. The polypeptide is Mucin-13 (Muc13) (Rattus norvegicus (Rat)).